The primary structure comprises 289 residues: 3-methyl-2-oxobutanoate hydroxymethyltransferase (289 aa).

Positions 50 and 89 each coordinate Mg(2+). Residues 50-51 (DS), aspartate 89, and lysine 119 contribute to the 3-methyl-2-oxobutanoate site. Glutamate 121 provides a ligand contact to Mg(2+). Glutamate 188 acts as the Proton acceptor in catalysis. The disordered stretch occupies residues 266–289 (AQHSFGMPEDEQRRWEENVSGADD).

Belongs to the PanB family. Homodecamer; pentamer of dimers. Mg(2+) is required as a cofactor.

The protein localises to the cytoplasm. It catalyses the reaction 3-methyl-2-oxobutanoate + (6R)-5,10-methylene-5,6,7,8-tetrahydrofolate + H2O = 2-dehydropantoate + (6S)-5,6,7,8-tetrahydrofolate. Its pathway is cofactor biosynthesis; (R)-pantothenate biosynthesis; (R)-pantoate from 3-methyl-2-oxobutanoate: step 1/2. In terms of biological role, catalyzes the reversible reaction in which hydroxymethyl group from 5,10-methylenetetrahydrofolate is transferred onto alpha-ketoisovalerate to form ketopantoate. The protein is 3-methyl-2-oxobutanoate hydroxymethyltransferase of Oleidesulfovibrio alaskensis (strain ATCC BAA-1058 / DSM 17464 / G20) (Desulfovibrio alaskensis).